We begin with the raw amino-acid sequence, 76 residues long: Cytochrome c oxidase subunit 6C-2 (76 aa).

Over 4-14 the chain is Mitochondrial matrix; the sequence is GALLPKPQMRG. Residues 15–55 traverse the membrane as a helical segment; it reads LLAKRLRVHIVGAFVVALGVAAAYKFGVAEPRKKAYADFYR. The Mitochondrial intermembrane portion of the chain corresponds to 56 to 76; the sequence is NYDSMKDFEEMRQAGVFQSAK. Ser74 bears the Phosphoserine mark.

The protein belongs to the cytochrome c oxidase subunit 6c family. Component of the cytochrome c oxidase (complex IV, CIV), a multisubunit enzyme composed of 14 subunits. The complex is composed of a catalytic core of 3 subunits MT-CO1, MT-CO2 and MT-CO3, encoded in the mitochondrial DNA, and 11 supernumerary subunits COX4I, COX5A, COX5B, COX6A, COX6B, COX6C, COX7A, COX7B, COX7C, COX8 and NDUFA4, which are encoded in the nuclear genome. The complex exists as a monomer or a dimer and forms supercomplexes (SCs) in the inner mitochondrial membrane with NADH-ubiquinone oxidoreductase (complex I, CI) and ubiquinol-cytochrome c oxidoreductase (cytochrome b-c1 complex, complex III, CIII), resulting in different assemblies (supercomplex SCI(1)III(2)IV(1) and megacomplex MCI(2)III(2)IV(2)).

The protein localises to the mitochondrion inner membrane. Its pathway is energy metabolism; oxidative phosphorylation. In terms of biological role, component of the cytochrome c oxidase, the last enzyme in the mitochondrial electron transport chain which drives oxidative phosphorylation. The respiratory chain contains 3 multisubunit complexes succinate dehydrogenase (complex II, CII), ubiquinol-cytochrome c oxidoreductase (cytochrome b-c1 complex, complex III, CIII) and cytochrome c oxidase (complex IV, CIV), that cooperate to transfer electrons derived from NADH and succinate to molecular oxygen, creating an electrochemical gradient over the inner membrane that drives transmembrane transport and the ATP synthase. Cytochrome c oxidase is the component of the respiratory chain that catalyzes the reduction of oxygen to water. Electrons originating from reduced cytochrome c in the intermembrane space (IMS) are transferred via the dinuclear copper A center (CU(A)) of subunit 2 and heme A of subunit 1 to the active site in subunit 1, a binuclear center (BNC) formed by heme A3 and copper B (CU(B)). The BNC reduces molecular oxygen to 2 water molecules using 4 electrons from cytochrome c in the IMS and 4 protons from the mitochondrial matrix. The sequence is that of Cytochrome c oxidase subunit 6C-2 (Cox6c2) from Rattus norvegicus (Rat).